Here is an 825-residue protein sequence, read N- to C-terminus: MTKKQENETSKELGMDNKKTSGKSGKLKISVSAIRKGEKKTEGKRSNTRRRANNHSNDHSKRRRPAAQDLLKDLKQKQRADEARLDQESKAAKQEYKKSLNKAEASESKPVVKKVESVEKPAETAAEAPKVRGPKILKPSPARLKQNQANSEKPAAKPSSSRRPSSRPSFTEAPMPENKEGRRRKSGKPGRKGQNSYADQGRGANSNRSEQRKRKNKKHQSAPQVKKQVTQRKDRPLPESFEYEVGMNAQDLGKILHREPAEIVKKLFMLGIMINQNLSLDKDTIELLAADYGIEAVEKVHEDISDIDNIFAQEMEESKNSENQVVRPPVVTIMGHVDHGKTTLLDRLRHTRVSEHEAGGITQNIGAYQVRINDRLITFLDTPGHAAFSSMRARGAEITDIVVLIVAADDGVMPQTIEAIDHAKSAGVPIIVAINKMDRPGANPAHVTEQLMQYELIPENYGGSTIFVNISAKTGMGIDELLENIILEADMLELKADPKQKAIGTVVEARLSRGKGPVADVLIQQGTLRVGDPIVVGDTFGRVRTMTNDKGHQVKKATPSMPVEITGLNDVPESADKLVVFADEKTARAVGEARAQQSLQKQRENVQHVTLDNLFDTMKRESMKSVDIVLKADVQGSAEALAQSFQKIDVEGVRVNIIHSGVGAINESDVTLASASNALIIGFNVRPTATAKSQAAQEGVDIRLYSIIYKAIDDVKAAMQGMLEPTYEEKVIGNLTVRETWKVSKIGTIAGAFVDNGYVTRESGIRVIRDGVVKYDGKVASLRRFKDDVKEVKAGFDCGLTIENFNDIKEGDELEAYEMQEVKPS.

Basic and acidic residues-rich tracts occupy residues 1 to 19, 35 to 45, 70 to 98, and 113 to 122; these read MTKK…DNKK, RKGEKKTEGKR, LLKD…EYKK, and KKVESVEKPA. The disordered stretch occupies residues 1–239; sequence MTKKQENETS…TQRKDRPLPE (239 aa). Low complexity predominate over residues 158–169; sequence PSSSRRPSSRPS. Basic residues predominate over residues 181-191; the sequence is GRRRKSGKPGR. The span at 194-208 shows a compositional bias: polar residues; the sequence is QNSYADQGRGANSNR. A compositionally biased stretch (basic residues) spans 211 to 220; sequence QRKRKNKKHQ. Residues 326-495 enclose the tr-type G domain; it reads VRPPVVTIMG…ILEADMLELK (170 aa). Residues 335–342 are G1; sequence GHVDHGKT. 335-342 serves as a coordination point for GTP; it reads GHVDHGKT. Residues 360 to 364 form a G2 region; it reads GITQN. Positions 381–384 are G3; it reads DTPG. GTP-binding positions include 381–385 and 435–438; these read DTPGH and NKMD. Residues 435–438 form a G4 region; the sequence is NKMD. Positions 471–473 are G5; sequence SAK.

Belongs to the TRAFAC class translation factor GTPase superfamily. Classic translation factor GTPase family. IF-2 subfamily.

It localises to the cytoplasm. Functionally, one of the essential components for the initiation of protein synthesis. Protects formylmethionyl-tRNA from spontaneous hydrolysis and promotes its binding to the 30S ribosomal subunits. Also involved in the hydrolysis of GTP during the formation of the 70S ribosomal complex. The protein is Translation initiation factor IF-2 of Lactobacillus delbrueckii subsp. bulgaricus (strain ATCC 11842 / DSM 20081 / BCRC 10696 / JCM 1002 / NBRC 13953 / NCIMB 11778 / NCTC 12712 / WDCM 00102 / Lb 14).